A 332-amino-acid polypeptide reads, in one-letter code: Fructose-1,6-bisphosphatase class 1 1 (332 aa).

Mg(2+) contacts are provided by Glu-92, Asp-115, Leu-117, and Asp-118. Substrate contacts are provided by residues 118 to 121 (DGSS), Asn-211, Tyr-244, 262 to 264 (YLY), and Lys-274. Glu-280 contributes to the Mg(2+) binding site.

Belongs to the FBPase class 1 family. As to quaternary structure, homotetramer. Requires Mg(2+) as cofactor.

The protein resides in the cytoplasm. The enzyme catalyses beta-D-fructose 1,6-bisphosphate + H2O = beta-D-fructose 6-phosphate + phosphate. Its pathway is carbohydrate biosynthesis; gluconeogenesis. In Christiangramia forsetii (strain DSM 17595 / CGMCC 1.15422 / KT0803) (Gramella forsetii), this protein is Fructose-1,6-bisphosphatase class 1 1.